The primary structure comprises 240 residues: UDP-2,3-diacylglucosamine hydrolase (240 aa).

Mn(2+)-binding residues include D9, H11, D43, N81, and H116. Position 81 to 82 (81 to 82 (NR)) interacts with substrate. 5 residues coordinate substrate: D124, S162, K166, K169, and H197. Residues H197 and H199 each contribute to the Mn(2+) site.

It belongs to the LpxH family. The cofactor is Mn(2+).

The protein localises to the cell inner membrane. It carries out the reaction UDP-2-N,3-O-bis[(3R)-3-hydroxytetradecanoyl]-alpha-D-glucosamine + H2O = 2-N,3-O-bis[(3R)-3-hydroxytetradecanoyl]-alpha-D-glucosaminyl 1-phosphate + UMP + 2 H(+). Its pathway is glycolipid biosynthesis; lipid IV(A) biosynthesis; lipid IV(A) from (3R)-3-hydroxytetradecanoyl-[acyl-carrier-protein] and UDP-N-acetyl-alpha-D-glucosamine: step 4/6. Its function is as follows. Hydrolyzes the pyrophosphate bond of UDP-2,3-diacylglucosamine to yield 2,3-diacylglucosamine 1-phosphate (lipid X) and UMP by catalyzing the attack of water at the alpha-P atom. Involved in the biosynthesis of lipid A, a phosphorylated glycolipid that anchors the lipopolysaccharide to the outer membrane of the cell. In Neisseria meningitidis serogroup C (strain 053442), this protein is UDP-2,3-diacylglucosamine hydrolase.